Consider the following 147-residue polypeptide: uncharacterized protein (147 aa).

The HTH asnC-type domain maps to 2–63 (LDELDKKIIG…KLNYENIGYD (62 aa)). Residues 21-40 (YREIAKELNVAVGTIYNRIK) constitute a DNA-binding region (H-T-H motif).

This is an uncharacterized protein from Pyrococcus abyssi (strain GE5 / Orsay).